The following is a 246-amino-acid chain: UDP-N-acetyl-D-mannosaminuronic acid transferase (246 aa).

It belongs to the glycosyltransferase 26 family.

The catalysed reaction is UDP-N-acetyl-alpha-D-mannosaminouronate + N-acetyl-alpha-D-glucosaminyl-di-trans,octa-cis-undecaprenyl diphosphate = beta-D-ManNAcA-(1-&gt;4)-alpha-D-GlcNAc-di-trans,octa-cis-undecaprenyl diphosphate + UDP + H(+). The protein operates within bacterial outer membrane biogenesis; enterobacterial common antigen biosynthesis. Catalyzes the synthesis of Und-PP-GlcNAc-ManNAcA (Lipid II), the second lipid-linked intermediate involved in enterobacterial common antigen (ECA) synthesis. This chain is UDP-N-acetyl-D-mannosaminuronic acid transferase, found in Escherichia coli (strain ATCC 8739 / DSM 1576 / NBRC 3972 / NCIMB 8545 / WDCM 00012 / Crooks).